The chain runs to 606 residues: NADH-ubiquinone oxidoreductase chain 5 (606 aa).

A run of 16 helical transmembrane segments spans residues 1–21 (MNIF…PIIA), 38–58 (NIIS…IYSG), 87–107 (MIFV…SIWY), 114–134 (ITQF…LVTA), 140–160 (LFIG…WWYG), 171–191 (AILY…WFLS), 213–233 (LMGL…HPWL), 241–261 (TPVS…FLLI), 273–293 (AQTL…ICAL), 301–320 (IIAF…IGIN), 325–347 (AFLH…GSII), 366–386 (MPFT…MPFL), 409–429 (LLMT…MIFF), 457–477 (LLIG…PTTT), 488–508 (LMAL…SLAT), and 582–602 (GLIK…LLLL).

The protein belongs to the complex I subunit 5 family. In terms of assembly, core subunit of respiratory chain NADH dehydrogenase (Complex I) which is composed of 45 different subunits.

Its subcellular location is the mitochondrion inner membrane. It carries out the reaction a ubiquinone + NADH + 5 H(+)(in) = a ubiquinol + NAD(+) + 4 H(+)(out). In terms of biological role, core subunit of the mitochondrial membrane respiratory chain NADH dehydrogenase (Complex I) which catalyzes electron transfer from NADH through the respiratory chain, using ubiquinone as an electron acceptor. Essential for the catalytic activity and assembly of complex I. The chain is NADH-ubiquinone oxidoreductase chain 5 (MT-ND5) from Rhinoceros unicornis (Greater Indian rhinoceros).